We begin with the raw amino-acid sequence, 150 residues long: Large ribosomal subunit protein bL9 (150 aa).

Belongs to the bacterial ribosomal protein bL9 family.

Functionally, binds to the 23S rRNA. This is Large ribosomal subunit protein bL9 from Herminiimonas arsenicoxydans.